The chain runs to 101 residues: A-type ATP synthase subunit K (101 aa).

3 helical membrane-spanning segments follow: residues 4–24 (ALLISLILPILIGGLVAAAQA), 32–52 (FMGINIGAGLAVGLAAIGAGV), and 75–95 (VLIFVAIGEGIAVYGIIFAVL).

This sequence belongs to the V-ATPase proteolipid subunit family. Has multiple subunits with at least A(3), B(3), C, D, E, F, H, I and proteolipid K(x).

It localises to the cell membrane. Its function is as follows. Component of the A-type ATP synthase that produces ATP from ADP in the presence of a proton gradient across the membrane. The chain is A-type ATP synthase subunit K from Sulfolobus acidocaldarius (strain ATCC 33909 / DSM 639 / JCM 8929 / NBRC 15157 / NCIMB 11770).